We begin with the raw amino-acid sequence, 401 residues long: Forkhead box protein H1 (401 aa).

Residues 32–57 form a disordered region; sequence MGPRDNSQLRPPEAESLSKTPKRRKK. The fork-head DNA-binding region spans 64–163; it reads KPPYTYLAMI…QNTALCRRWQ (100 aa). Positions 179–251 are disordered; it reads VLHGQPYQPP…PSSSSETPLW (73 aa). Positions 185-195 are enriched in pro residues; sequence YQPPSPPPPPR. The segment covering 221-230 has biased composition (polar residues); that stretch reads GQSTAAQAGT. Positions 307-390 are SMAD-interaction domain (SID); the sequence is LWGQLPTSYL…VSHPRDLAAP (84 aa). The Fast/FoxH1 motif 1 (FM1) motif lies at 311–315; sequence LPTSY. The Fast/FoxH1 motif 2 (FM2) signature appears at 321-327; it reads PNVVMPL. An SMAD interaction motif (SIM) motif is present at residues 363–384; sequence LDSLFQGVPPNKSIYDVWVSHP.

Interacts with the MH2 domains of SMAD2 and SMAD3.

The protein resides in the nucleus. Transcriptional activator. Recognizes and binds to the DNA sequence 5'-TGT[GT][GT]ATT-3'. Required for induction of the goosecoid (GSC) promoter by TGF-beta or activin signaling. Forms a transcriptionally active complex containing FOXH1/SMAD2/SMAD4 on a site on the GSC promoter called TARE (TGF-beta/activin response element). This chain is Forkhead box protein H1 (Foxh1), found in Mus musculus (Mouse).